The chain runs to 362 residues: Porin Omp2b (362 aa).

The signal sequence occupies residues 1 to 22; sequence MNIKSLLLGSAAALVAASGAQA.

Belongs to the alphaproteobacteria porin family. As to quaternary structure, homotrimer.

The protein resides in the cell outer membrane. In terms of biological role, forms passive diffusion pores that allow small molecular weight hydrophilic materials across the outer membrane. This Brucella suis biovar 1 (strain 1330) protein is Porin Omp2b (omp2b).